The primary structure comprises 451 residues: Tubulin alpha-1 chain (451 aa).

Glutamine 11 lines the GTP pocket. N6-acetyllysine is present on lysine 40. 6 residues coordinate GTP: glutamate 71, glycine 144, threonine 145, threonine 179, asparagine 206, and asparagine 228. Glutamate 71 contacts Mg(2+). Glutamate 254 is a catalytic residue.

This sequence belongs to the tubulin family. In terms of assembly, dimer of alpha and beta chains. A typical microtubule is a hollow water-filled tube with an outer diameter of 25 nm and an inner diameter of 15 nM. Alpha-beta heterodimers associate head-to-tail to form protofilaments running lengthwise along the microtubule wall with the beta-tubulin subunit facing the microtubule plus end conferring a structural polarity. Microtubules usually have 13 protofilaments but different protofilament numbers can be found in some organisms and specialized cells. Requires Mg(2+) as cofactor. Post-translationally, undergoes a tyrosination/detyrosination cycle, the cyclic removal and re-addition of a C-terminal tyrosine residue by the enzymes tubulin tyrosine carboxypeptidase (TTCP) and tubulin tyrosine ligase (TTL), respectively. Acetylation of alpha chains at Lys-40 stabilizes microtubules and affects affinity and processivity of microtubule motors. This modification has a role in multiple cellular functions, ranging from cell motility, cell cycle progression or cell differentiation to intracellular trafficking and signaling.

The protein localises to the cytoplasm. It is found in the cytoskeleton. The enzyme catalyses GTP + H2O = GDP + phosphate + H(+). Its function is as follows. Tubulin is the major constituent of microtubules, a cylinder consisting of laterally associated linear protofilaments composed of alpha- and beta-tubulin heterodimers. Microtubules grow by the addition of GTP-tubulin dimers to the microtubule end, where a stabilizing cap forms. Below the cap, tubulin dimers are in GDP-bound state, owing to GTPase activity of alpha-tubulin. In Eleusine indica (Goosegrass), this protein is Tubulin alpha-1 chain (TUBA1).